Consider the following 142-residue polypeptide: Large ribosomal subunit protein uL13 (142 aa).

Belongs to the universal ribosomal protein uL13 family. In terms of assembly, part of the 50S ribosomal subunit.

This protein is one of the early assembly proteins of the 50S ribosomal subunit, although it is not seen to bind rRNA by itself. It is important during the early stages of 50S assembly. The polypeptide is Large ribosomal subunit protein uL13 (Francisella philomiragia subsp. philomiragia (strain ATCC 25017 / CCUG 19701 / FSC 153 / O#319-036)).